The chain runs to 199 residues: MESGSVANDSGPLNSTPDVHLYGKTAAMKQRRSNTMLFVFRLLTFSFSLAAVLVMGTNKQKIRSAPQYLEVAWHDFDPFRYVFAVNAIICVYSFVETWLAVYTLSRGTLLLPETFQVWFDYGHDQGFACLLFSANSVGIAMAQLLQSGSTLIQGQYYCSDAGAYCTQARVSIAMGFGAFLFLALSSFLTGLRVARWYLP.

Over 1–35 (MESGSVANDSGPLNSTPDVHLYGKTAAMKQRRSNT) the chain is Cytoplasmic. A helical membrane pass occupies residues 36–56 (MLFVFRLLTFSFSLAAVLVMG). At 57–80 (TNKQKIRSAPQYLEVAWHDFDPFR) the chain is on the extracellular side. Residues 81-101 (YVFAVNAIICVYSFVETWLAV) traverse the membrane as a helical segment. The Cytoplasmic segment spans residues 102 to 124 (YTLSRGTLLLPETFQVWFDYGHD). A helical membrane pass occupies residues 125 to 145 (QGFACLLFSANSVGIAMAQLL). Topologically, residues 146-169 (QSGSTLIQGQYYCSDAGAYCTQAR) are extracellular. A helical membrane pass occupies residues 170–190 (VSIAMGFGAFLFLALSSFLTG). Residues 191-199 (LRVARWYLP) lie on the Cytoplasmic side of the membrane.

Belongs to the Casparian strip membrane proteins (CASP) family. In terms of assembly, homodimer and heterodimers.

It is found in the cell membrane. This Physcomitrium patens (Spreading-leaved earth moss) protein is CASP-like protein 4C1.